The primary structure comprises 487 residues: Calcium-dependent mitochondrial ATP-magnesium/phosphate carrier protein 2 (487 aa).

Topologically, residues 1–211 (MEATKSSKQN…ISKHIKRSNY (211 aa)) are mitochondrial intermembrane. 4 consecutive EF-hand domains span residues 36-71 (ERDL…LQIP), 72-107 (SGYK…KELE), 108-138 (LYRI…AGIE), and 139-174 (IKDE…YPHE). 5 residues coordinate Ca(2+): aspartate 85, asparagine 87, aspartate 89, arginine 91, and glutamate 96. Ca(2+)-binding residues include aspartate 152, aspartate 154, aspartate 156, and glutamate 163. 3 Solcar repeats span residues 206–289 (IKRS…FKNA), 301–389 (IGTT…LKDL), and 400–483 (PGPL…MKKS). Residues 212 to 229 (FIAGGIAGAASRTATAPL) traverse the membrane as a helical segment. Over 230-263 (DRLKVLLQIQKTDARIREAIKLIWKQGGVRGFFR) the chain is Mitochondrial matrix. A helical membrane pass occupies residues 264–283 (GNGLNIVKVAPESAIKFYAY). Residues 284–310 (ELFKNAIGENMGEDKADIGTTVRLFAG) lie on the Mitochondrial intermembrane side of the membrane. The chain crosses the membrane as a helical span at residues 311 to 324 (GMAGAVAQASIYPL). The Mitochondrial matrix segment spans residues 325–363 (DLVKTRLQTYTSQAGVAVPRLGTLTKDILVHEGPRAFYK). The chain crosses the membrane as a helical span at residues 364 to 383 (GLFPSLLGIIPYAGIDLAAY). The Mitochondrial intermembrane portion of the chain corresponds to 384-405 (ETLKDLSRTYILQDAEPGPLVQ). The helical transmembrane segment at 406 to 423 (LGCGTISGALGATCVYPL) threads the bilayer. At 424–457 (QVVRTRMQAERARTSMSGVFRRTISEEGYRALYK) the chain is on the mitochondrial matrix side. A helical transmembrane segment spans residues 458–477 (GLLPNLLKVVPAASITYMVY). Over 478-487 (EAMKKSLELD) the chain is Mitochondrial intermembrane.

Belongs to the mitochondrial carrier (TC 2.A.29) family. As to expression, expressed in flowers, leaves, stems, roots and seedlings, mostly in aerial parts.

It localises to the mitochondrion inner membrane. Counter-exchange transport activity is saturable and inhibited by pyridoxal-5'-phosphate, EDTA and EGTA. Activated by calcium Ca(2+) and manganese Mn(2+) ions, and slightly by iron Fe(2+) and zinc Zn(2+) ions. Repressed by copper ions Cu(2+) and slightly by magnesium Mg(2+) ions. Magnesium Mg(2+) ions promotes slightly ATP uptake, ATP-Mg(2+) being exchanged with ATP(4-). Its function is as follows. Calcium-dependent mitochondrial carrier protein that catalyzes the import of ATP co-transported with metal divalent cations across the mitochondrial inner membrane in exchange for phosphate (Pi). Can transport phosphate, AMP, ADP, ATP, adenosine 5'-phosphosulfate, sulfate and thiosulfate, and, to a lesser extent, other nucleotides. Binds calcium ions Ca(2+). Also mediates calcium uptake. The sequence is that of Calcium-dependent mitochondrial ATP-magnesium/phosphate carrier protein 2 from Arabidopsis thaliana (Mouse-ear cress).